The chain runs to 139 residues: Ribulose bisphosphate carboxylase small subunit (139 aa).

This sequence belongs to the RuBisCO small chain family. Heterohexadecamer of 8 large and 8 small subunits.

The protein localises to the plastid. It is found in the chloroplast. RuBisCO catalyzes two reactions: the carboxylation of D-ribulose 1,5-bisphosphate, the primary event in carbon dioxide fixation, as well as the oxidative fragmentation of the pentose substrate in the photorespiration process. Both reactions occur simultaneously and in competition at the same active site. Although the small subunit is not catalytic it is essential for maximal activity. The protein is Ribulose bisphosphate carboxylase small subunit of Thalassiosira nordenskioeldii (Marine diatom).